The primary structure comprises 166 residues: Orotate phosphoribosyltransferase (166 aa).

Residues Arg83, Lys84, Arg86, His88, and 108 to 116 (EDVVTTGNS) contribute to the 5-phospho-alpha-D-ribose 1-diphosphate site. Orotate contacts are provided by Thr112 and Arg140.

It belongs to the purine/pyrimidine phosphoribosyltransferase family. PyrE subfamily. In terms of assembly, homodimer. The cofactor is Mg(2+).

It carries out the reaction orotidine 5'-phosphate + diphosphate = orotate + 5-phospho-alpha-D-ribose 1-diphosphate. It participates in pyrimidine metabolism; UMP biosynthesis via de novo pathway; UMP from orotate: step 1/2. Functionally, catalyzes the transfer of a ribosyl phosphate group from 5-phosphoribose 1-diphosphate to orotate, leading to the formation of orotidine monophosphate (OMP). In Thermoplasma volcanium (strain ATCC 51530 / DSM 4299 / JCM 9571 / NBRC 15438 / GSS1), this protein is Orotate phosphoribosyltransferase.